Consider the following 546-residue polypeptide: Protein FAM124A (546 aa).

3 disordered regions span residues 1-37 (MDPK…SELS), 286-360 (FPKP…FQRS), and 488-546 (SSSS…EFYI). The segment covering 24–36 (SDYSHLSSTSSEL) has biased composition (low complexity). Residues 286–302 (FPKPGRVHHASEKKRHS) are compositionally biased toward basic residues. Composition is skewed to polar residues over residues 304–324 (PLPS…SPLN) and 347–360 (ANST…FQRS). Residues 488-511 (SSSSATARAAPPAPSTSTLTDSSP) show a composition bias toward low complexity.

This sequence belongs to the FAM124 family.

The protein is Protein FAM124A (FAM124A) of Homo sapiens (Human).